A 338-amino-acid chain; its full sequence is Heat-inducible transcription repressor HrcA (338 aa).

It belongs to the HrcA family.

Functionally, negative regulator of class I heat shock genes (grpE-dnaK-dnaJ and groELS operons). Prevents heat-shock induction of these operons. The sequence is that of Heat-inducible transcription repressor HrcA from Nitrosomonas europaea (strain ATCC 19718 / CIP 103999 / KCTC 2705 / NBRC 14298).